Here is a 229-residue protein sequence, read N- to C-terminus: Large ribosomal subunit protein uL1 (229 aa).

It belongs to the universal ribosomal protein uL1 family. As to quaternary structure, part of the 50S ribosomal subunit.

In terms of biological role, binds directly to 23S rRNA. The L1 stalk is quite mobile in the ribosome, and is involved in E site tRNA release. Functionally, protein L1 is also a translational repressor protein, it controls the translation of the L11 operon by binding to its mRNA. In Clostridium kluyveri (strain ATCC 8527 / DSM 555 / NBRC 12016 / NCIMB 10680 / K1), this protein is Large ribosomal subunit protein uL1.